The primary structure comprises 430 residues: Cytochrome P450 monooxygenase FGSG_15680 (430 aa).

Heme is bound at residue Cys351.

This sequence belongs to the cytochrome P450 family. Requires heme as cofactor.

The protein operates within mycotoxin biosynthesis. Functionally, cytochrome P450 monooxygenase; part of the gene cluster that mediates the biosynthesis of gramillins A and B, bicyclic lipopeptides that induce cell death in maize leaves but not in wheat leaves. The nonribosomal peptide synthetase GRA1 incorporates respectively a glutamic adic (Glu), a leucine (Leu), a serine (Ser), a hydroxyglutamine (HOGln), a 2-amino decanoic acid, and 2 cysteins (CysB and CysA). The biosynthesis of 2-amino decanoic acid incorporated in gramillins could be initiated by a fatty acid synthase composed of the alpha and beta subunits FGSG_00036 and FGSG_11656. The cytochrome P450 monooxygenase FGSG_15680 could hydroxylate the fatty acid chain. Subsequent oxidation to the ketone by the oxidoreductase FGSG_00048 and transamination by aminotransferase FGSG_00049 could form 2-amino-decanoic acid. On the other hand, FGSG_15680 could also be responsible for the HO-modified glutamine at the gamma-position. Whether hydroxylation occurs on the fully assembled product or on the Gln residue prior to assembly into the gramillins requires further proof. The thioredoxin FGSG_00043 could also be required for the disulfide-bond formation between CysA and CysB. The specific involvement of the remaining proteins from the cluster is more difficult to discern, but could have broader regulatory (FGSG_00040 and FGSG_11657) or enzymatic functions (FGSG_00044 and FGSG_00045). The final C-domain of GRA1 does not possess the expected sequence of a termination CT domain, often implicated in macrocyclization and release of a cyclopeptidein fungal NRPs; and the thioesterase FGSG_00047 may act in concert with the terminal C-domain of GRA1 to catalyze the formation of the macrocyclic anhydride and release of the products. In Gibberella zeae (strain ATCC MYA-4620 / CBS 123657 / FGSC 9075 / NRRL 31084 / PH-1) (Wheat head blight fungus), this protein is Cytochrome P450 monooxygenase FGSG_15680.